We begin with the raw amino-acid sequence, 282 residues long: Putative hydrolase Bcen_5340 (282 aa).

Residues Glu-124, Glu-126, and Asp-155 each coordinate Mg(2+).

The protein belongs to the FAH family. Mg(2+) is required as a cofactor.

This chain is Putative hydrolase Bcen_5340, found in Burkholderia orbicola (strain AU 1054).